We begin with the raw amino-acid sequence, 551 residues long: TRAF3-interacting JNK-activating modulator (551 aa).

Over 1–526 the chain is Cytoplasmic; it reads MISPDPRPSP…QLPPRRQCGR (526 aa). Disordered regions lie at residues 73 to 95 and 140 to 178; these read LEEKGKAQHPQAREQGPSRRPGQ and DHLSSQAGGLPPQDTPIKKPPKHHRGTQTKAEGPTIKND. Coiled-coil stretches lie at residues 240–436 and 464–506; these read DKLK…LLTK and WDLR…RKLQ. The helical; Anchor for type IV membrane protein transmembrane segment at 527–544 threads the bilayer; the sequence is WLPVLMVVIAAALAVFLA. At 545–551 the chain is on the extracellular side; the sequence is NKDNLMI.

As to quaternary structure, interacts (via its coiled-coil domain) with TRAF3 (via isoleucine zipper). Interacts with MAP2K1. Interacts with PPP2CA; this interaction targets PPP2CA to the lysosomes. Interacts with TLR4. Interacts with MAVS. Interacts with TBK1.

The protein resides in the cell membrane. Its subcellular location is the golgi apparatus membrane. It is found in the lysosome membrane. The protein localises to the mitochondrion outer membrane. Its function is as follows. Adapter protein that plays essential roles in both innate and adaptive immunity. Plays a crucial role in the regulation of thymocyte development. Mechanistically, mediates TCR-stimulated activation through recruiting MAP2K1/MEK1 to the Golgi and, thereby, facilitating the interaction of MAP2K1/MEK1 with its activator BRAF. Also plays an essential role in regulatory T-cell stability and function by recruiting the serine-threonine phosphatase catalytic subunit (PPP2CA) to the lysosome, thereby facilitating the interaction of PP2Ac with the mTORC1 component RPTOR and restricting glycolytic metabolism. Positively regulates TLR4 signaling activity in macrophage-mediated inflammation by acting as a molecular clamp to facilitate LPS-induced translocation of TLR4 to lipid rafts. In response to viral infection, facilitates the recruitment of TRAF3 to MAVS within mitochondria leading to IRF3 activation and interferon production. However, participates in the maintenance of immune homeostasis and the prevention of overzealous innate immunity by promoting 'Lys-48'-dependent ubiquitination of TBK1. In Homo sapiens (Human), this protein is TRAF3-interacting JNK-activating modulator (TRAF3IP3).